We begin with the raw amino-acid sequence, 175 residues long: Urease accessory protein UreE (175 aa).

Residues 134 to 175 (FQPESGAYGGGHHHGDESATDLHNPGHGPHRSVPKIHEFKPR) are disordered.

This sequence belongs to the UreE family.

The protein resides in the cytoplasm. Involved in urease metallocenter assembly. Binds nickel. Probably functions as a nickel donor during metallocenter assembly. In Dechloromonas aromatica (strain RCB), this protein is Urease accessory protein UreE.